The following is a 290-amino-acid chain: Agmatinase (290 aa).

6 residues coordinate Mn(2+): His-112, Asp-135, His-137, Asp-139, Asp-216, and Asp-218.

The protein belongs to the arginase family. Agmatinase subfamily. Mn(2+) serves as cofactor.

It catalyses the reaction agmatine + H2O = urea + putrescine. The protein operates within amine and polyamine biosynthesis; putrescine biosynthesis via agmatine pathway; putrescine from agmatine: step 1/1. In terms of biological role, catalyzes the formation of putrescine from agmatine. This Bacillus anthracis protein is Agmatinase (speB).